Consider the following 784-residue polypeptide: Ribosome biogenesis protein BOP1 homolog (784 aa).

Positions 1–11 (MTKKLALKRRG) are enriched in basic residues. A disordered region spans residues 1-159 (MTKKLALKRR…DSDTSDEEDI (159 aa)). 4 stretches are compositionally biased toward acidic residues: residues 27–36 (SENEEEEEDL), 45–54 (EDSTDDEGID), 62–73 (SEELQFESDEEG), and 84–111 (AEED…EDEE). Composition is skewed to basic and acidic residues over residues 112 to 123 (KVSKSKQSDDKP) and 138 to 148 (LPKRDSSKPEY). A compositionally biased stretch (acidic residues) spans 149–158 (QDSDTSDEED). WD repeat units lie at residues 445–486 (GHTD…RTIE), 488–526 (DEVV…KVLV), 570–612 (THFK…SQIP), 615–653 (KSKG…LVKK), 656–695 (TNSK…KPYQ), 699–738 (LHRN…DLLQ), and 754–784 (RDEF…RLYT).

This sequence belongs to the WD repeat BOP1/ERB1 family.

The protein resides in the nucleus. Its subcellular location is the nucleolus. It localises to the nucleoplasm. In terms of biological role, required for maturation of ribosomal RNAs and formation of the large ribosomal subunit. In Drosophila sechellia (Fruit fly), this protein is Ribosome biogenesis protein BOP1 homolog.